Here is a 199-residue protein sequence, read N- to C-terminus: Fe/S biogenesis protein NfuA (199 aa).

[4Fe-4S] cluster is bound by residues Cys-151 and Cys-154.

Belongs to the NfuA family. Homodimer. [4Fe-4S] cluster is required as a cofactor.

Functionally, involved in iron-sulfur cluster biogenesis. Binds a 4Fe-4S cluster, can transfer this cluster to apoproteins, and thereby intervenes in the maturation of Fe/S proteins. Could also act as a scaffold/chaperone for damaged Fe/S proteins. In Xanthomonas axonopodis pv. citri (strain 306), this protein is Fe/S biogenesis protein NfuA.